The sequence spans 368 residues: MVTGWHRPTWIEIDRAAIRENIKNEQNKLPENVDLWAVVKANAYGHGIIEVARTAKEAGAKGFCVAILDEALALREAGFQDDFILVLGATRKEDANLAAKNHISLTVFREDWLEDLTLEAPLRIHLKVDSGMGRLGIRTTDEARRIETTIAKDNQLQLEGIYTHFATADQLETSYFEQQLAKFQTILTSLKNRPTYVHTANSAASLLQPQIGFDAIRFGISMYGLTPSTEIKTSLPFELKPALALYTEMVHVKELAPGDSVSYGATYTATEREWVATLPIGYADGLIRHYSGFHVLVDGELAPIIGRVCMDQTIIKLPREFQTGSKVTIIGTDHGNTITADDAAHYLDTINYEVTCLLNERIPRKYIH.

The Proton acceptor; specific for D-alanine role is filled by lysine 40. N6-(pyridoxal phosphate)lysine is present on lysine 40. Arginine 134 contacts substrate. Catalysis depends on tyrosine 263, which acts as the Proton acceptor; specific for L-alanine. Methionine 310 lines the substrate pocket.

This sequence belongs to the alanine racemase family. The cofactor is pyridoxal 5'-phosphate.

The catalysed reaction is L-alanine = D-alanine. It functions in the pathway amino-acid biosynthesis; D-alanine biosynthesis; D-alanine from L-alanine: step 1/1. Functionally, catalyzes the interconversion of L-alanine and D-alanine. May also act on other amino acids. This Listeria monocytogenes serotype 4b (strain CLIP80459) protein is Alanine racemase (alr).